A 1006-amino-acid polypeptide reads, in one-letter code: DNA polymerase (1006 aa).

The protein belongs to the DNA polymerase type-B family. Interacts with OPG148. Component of the Uracil-DNA glycosylase(UDG)-OPG148-polymerase complex; OPG148 and OPG116/UDG form a heterodimeric processivity factor that associates with OPG071 to form the processive polymerase holoenzyme.

It catalyses the reaction DNA(n) + a 2'-deoxyribonucleoside 5'-triphosphate = DNA(n+1) + diphosphate. Functionally, catalyzes DNA synthesis. Acquires processivity by associating with a heterodimeric processivity factor comprised of the viral OPG148 and OPG116 proteins, thereby forming the DNA polymerase holoenzyme. Displays 3'- to 5' exonuclease activity. Might participate in viral DNA recombination. Does not perform OPG116/D4synthesis across an abasic site. In Homo sapiens (Human), this protein is DNA polymerase (OPG071).